Here is a 295-residue protein sequence, read N- to C-terminus: Enolase-phosphatase E1 (295 aa).

Mg(2+)-binding residues include Asp-20 and Glu-22. Substrate contacts are provided by residues 153–154 (SS) and Lys-187. Asp-212 serves as a coordination point for Mg(2+). Positions 260–295 (ETKEENGGATNGKRKIEETNDDVAEEDKAQVYPNKK) are disordered.

This sequence belongs to the HAD-like hydrolase superfamily. MasA/MtnC family. In terms of assembly, monomer. It depends on Mg(2+) as a cofactor.

It is found in the cytoplasm. The protein resides in the nucleus. It catalyses the reaction 5-methylsulfanyl-2,3-dioxopentyl phosphate + H2O = 1,2-dihydroxy-5-(methylsulfanyl)pent-1-en-3-one + phosphate. The protein operates within amino-acid biosynthesis; L-methionine biosynthesis via salvage pathway; L-methionine from S-methyl-5-thio-alpha-D-ribose 1-phosphate: step 3/6. It functions in the pathway amino-acid biosynthesis; L-methionine biosynthesis via salvage pathway; L-methionine from S-methyl-5-thio-alpha-D-ribose 1-phosphate: step 4/6. In terms of biological role, bifunctional enzyme that catalyzes the enolization of 2,3-diketo-5-methylthiopentyl-1-phosphate (DK-MTP-1-P) into the intermediate 2-hydroxy-3-keto-5-methylthiopentenyl-1-phosphate (HK-MTPenyl-1-P), which is then dephosphorylated to form the acireductone 1,2-dihydroxy-3-keto-5-methylthiopentene (DHK-MTPene). This chain is Enolase-phosphatase E1, found in Anopheles gambiae (African malaria mosquito).